A 554-amino-acid polypeptide reads, in one-letter code: (S)-1-hydroxy-N-methylcanadine 13-hydroxylase CYP82X2 (554 aa).

A helical membrane pass occupies residues 23-43 (IISTFIVTIISIVFLYTVLLI). Residue Cys-494 participates in heme binding.

It belongs to the cytochrome P450 family. The cofactor is heme. As to expression, highly expressed in capsules. Expressed is stems.

The protein resides in the membrane. It catalyses the reaction (S)-1-hydroxy-N-methylcanadine + reduced [NADPH--hemoprotein reductase] + O2 = (13S,14R)-1,13-dihydroxy-N-methylcanadine + oxidized [NADPH--hemoprotein reductase] + H2O + H(+). Its pathway is alkaloid biosynthesis. Functionally, cytochrome P450 involved in the biosynthesis of the benzylisoquinoline alkaloid noscapine. Converts (S)-1-hydroxy-N-methylcanadine to (13S,14R)-1,13-dihydroxy-N-methylcanadine. The protein is (S)-1-hydroxy-N-methylcanadine 13-hydroxylase CYP82X2 of Papaver somniferum (Opium poppy).